The chain runs to 344 residues: MDTLLHKDTIVAEWCDEIITRQSRENHNSLVGFRDRNRVVKHHIQQILDHLKGQNISKLAHVQDPKIAEALRTLIAWLKSNERFRPSTEPPLTDRQLEEAFSQLYLGDWAYVDRKYDDPVIPGQNFALFSFLPTVGAQPDADGVYGFLKIRGTFDRAEQAEDKARELIQYFTANTIKACKVGTPVPVAISQPSTEAIEIPPPKNGPFETDGPTDLKYQQLIQAQSMDEQKQIQEIYQNVEKLKEDVTKNPANKEPMQVYLELLQKMATCAWTYSQAQKTKDDMKSIILSDRLKLEEMDQKYPHLQNEYRKVYDEKNQQLGLDQCSDDMALGIRKYFGSRADLDF.

Positions 221–249 (IQAQSMDEQKQIQEIYQNVEKLKEDVTKN) form a coiled coil.

It belongs to the IIV-6 287R family.

This is an uncharacterized protein from Aedes vexans (Inland floodwater mosquito).